The chain runs to 339 residues: DNA-directed RNA polymerase subunit alpha (339 aa).

The segment at 1-233 (MVREEVAGST…DLFLPFLHAE (233 aa)) is alpha N-terminal domain (alpha-NTD). The interval 264-339 (KKGIPLNCIF…IDLLKNKLSF (76 aa)) is alpha C-terminal domain (alpha-CTD).

This sequence belongs to the RNA polymerase alpha chain family. As to quaternary structure, in plastids the minimal PEP RNA polymerase catalytic core is composed of four subunits: alpha, beta, beta', and beta''. When a (nuclear-encoded) sigma factor is associated with the core the holoenzyme is formed, which can initiate transcription.

Its subcellular location is the plastid. The protein localises to the chloroplast. It carries out the reaction RNA(n) + a ribonucleoside 5'-triphosphate = RNA(n+1) + diphosphate. In terms of biological role, DNA-dependent RNA polymerase catalyzes the transcription of DNA into RNA using the four ribonucleoside triphosphates as substrates. The protein is DNA-directed RNA polymerase subunit alpha of Psathyrostachys fragilis (Russian wild rye).